Here is a 257-residue protein sequence, read N- to C-terminus: Hydroxyethylthiazole kinase (257 aa).

Methionine 42 lines the substrate pocket. 2 residues coordinate ATP: arginine 117 and threonine 163. Alanine 190 provides a ligand contact to substrate.

It belongs to the Thz kinase family. Mg(2+) serves as cofactor.

It catalyses the reaction 5-(2-hydroxyethyl)-4-methylthiazole + ATP = 4-methyl-5-(2-phosphooxyethyl)-thiazole + ADP + H(+). The protein operates within cofactor biosynthesis; thiamine diphosphate biosynthesis; 4-methyl-5-(2-phosphoethyl)-thiazole from 5-(2-hydroxyethyl)-4-methylthiazole: step 1/1. Catalyzes the phosphorylation of the hydroxyl group of 4-methyl-5-beta-hydroxyethylthiazole (THZ). This chain is Hydroxyethylthiazole kinase, found in Roseobacter denitrificans (strain ATCC 33942 / OCh 114) (Erythrobacter sp. (strain OCh 114)).